The sequence spans 556 residues: (6-4)DNA photolyase (556 aa).

The Photolyase/cryptochrome alpha/beta domain maps to 24–162; that stretch reads SGSLIWFRKG…EVFSPVSHTL (139 aa). E262 contacts phosphate. FAD is bound by residues K263, 276–280, 317–321, 380–383, R386, 415–417, and N421; these read TTVMS, QLLWR, WMHH, and DSD. W320 serves as a coordination point for DNA. Residues 382-387 are interaction with DNA; it reads HHLARH. W427 lines the DNA pocket. The tract at residues 534 to 556 is disordered; it reads LRRKLQKDEHEESKIRNQRPKLK. Residues 539–548 are compositionally biased toward basic and acidic residues; sequence QKDEHEESKI.

Belongs to the DNA photolyase class-1 family. It depends on FAD as a cofactor. In terms of tissue distribution, expressed in siliques, flowers and leaves. Not detected in roots.

The enzyme catalyses (6-4) photoproduct (in DNA) = 2 pyrimidine residues (in DNA).. Its function is as follows. Involved in repair of UV radiation-induced DNA damage. Catalyzes the photoreactivation of pyrimidine [6-4] pyrimidone photoproduct (6-4 products). Binds specifically to DNA containing 6-4 products and repairs these lesions in a visible light-dependent manner. Not required for repair of cyclobutane pyrimidine dimer (CPD). This Arabidopsis thaliana (Mouse-ear cress) protein is (6-4)DNA photolyase (UVR3).